The primary structure comprises 395 residues: Phosphoglycerate kinase (395 aa).

Residues 21-23 (DLN), Arg-36, 59-62 (HLGR), Arg-113, and Arg-146 contribute to the substrate site. ATP is bound by residues Lys-197, Glu-324, and 350-353 (GGDT).

Belongs to the phosphoglycerate kinase family. Monomer.

The protein resides in the cytoplasm. It carries out the reaction (2R)-3-phosphoglycerate + ATP = (2R)-3-phospho-glyceroyl phosphate + ADP. It participates in carbohydrate degradation; glycolysis; pyruvate from D-glyceraldehyde 3-phosphate: step 2/5. The chain is Phosphoglycerate kinase from Acinetobacter baylyi (strain ATCC 33305 / BD413 / ADP1).